The primary structure comprises 640 residues: RNA polymerase II elongation factor ELL2 (640 aa).

3 disordered regions span residues 172–202 (AVSD…STIS), 290–320 (KLNP…PQKR), and 343–490 (RVPP…EEDL). Polar residues-rich tracts occupy residues 184–202 (TPMN…STIS) and 291–318 (LNPS…SSPQ). A compositionally biased stretch (low complexity) spans 360–372 (AAGLPLPPAAAAI). Over residues 391-401 (IVNSNSNSPST) the composition is skewed to polar residues. The segment covering 457 to 470 (MSHKKSKKKSKKHK) has biased composition (basic residues). The span at 471 to 490 (EKDQIKKHDIETIEEKEEDL) shows a compositional bias: basic and acidic residues. A phosphoserine mark is found at Ser-503 and Ser-580. Positions 526 to 636 (PDYLIKYIAI…LIGEFDQQQA (111 aa)) constitute an OCEL domain.

It belongs to the ELL/occludin family. In terms of assembly, component of the super elongation complex (SEC), at least composed of EAF1, EAF2, CDK9, MLLT3/AF9, AFF (AFF1 or AFF4), the P-TEFb complex and ELL (ELL, ELL2 or ELL3). Component of the little elongation complex (LEC), at least composed of ELL (ELL, ELL2 or ELL3), ZC3H8, ICE1 and ICE2. Interacts with AFF4; the interaction is direct and leads to stabilize ELL2 and prevent ELL2 ubiquitination. Interacts with EAF1 and EAF2. Post-translationally, ubiquitinated by SIAH1, leading to its degradation by the proteasome. Interaction with AFF4 stabilizes ELL2 and prevents ELL2 ubiquitination.

The protein resides in the nucleus. In terms of biological role, elongation factor component of the super elongation complex (SEC), a complex required to increase the catalytic rate of RNA polymerase II transcription by suppressing transient pausing by the polymerase at multiple sites along the DNA. Component of the little elongation complex (LEC), a complex required to regulate small nuclear RNA (snRNA) gene transcription by RNA polymerase II and III. Plays a role in immunoglobulin secretion in plasma cells: directs efficient alternative mRNA processing, influencing both proximal poly(A) site choice and exon skipping, as well as immunoglobulin heavy chain (IgH) alternative processing. Probably acts by regulating histone modifications accompanying transition from membrane-specific to secretory IgH mRNA expression. The protein is RNA polymerase II elongation factor ELL2 (ELL2) of Homo sapiens (Human).